Consider the following 284-residue polypeptide: 8-methylmenaquinol:fumarate reductase membrane anchor subunit (284 aa).

As to quaternary structure, the MFR complex is composed of three subunits: a flavoprotein (SdhA), an iron-sulfur protein (SdhB), and one hydrophobic anchor protein (SdhE).

The protein localises to the periplasm. It localises to the cell membrane. It catalyses the reaction 8-methylmenaquinone-6 + succinate = 8-methylmenaquinol-6 + fumarate. In terms of biological role, membrane anchor subunit of 8-methylmenaquinol:fumarate reductase (MFR), that catalyzes the reduction of fumarate using 8-methylmenaquinol-6 as electron donor. The complex shows no succinate oxidation activity. Is involved in anaerobic metabolism. SdhE likely contains the quinol/quinone binding site. This chain is 8-methylmenaquinol:fumarate reductase membrane anchor subunit, found in Wolinella succinogenes (strain ATCC 29543 / DSM 1740 / CCUG 13145 / JCM 31913 / LMG 7466 / NCTC 11488 / FDC 602W) (Vibrio succinogenes).